Here is a 328-residue protein sequence, read N- to C-terminus: Ferredoxin--NADP reductase (328 aa).

Residues Glu-34, Gln-42, Tyr-47, Val-87, Phe-120, Asp-283, and Thr-323 each contribute to the FAD site.

Belongs to the ferredoxin--NADP reductase type 2 family. Homodimer. Requires FAD as cofactor.

It carries out the reaction 2 reduced [2Fe-2S]-[ferredoxin] + NADP(+) + H(+) = 2 oxidized [2Fe-2S]-[ferredoxin] + NADPH. The sequence is that of Ferredoxin--NADP reductase from Pediococcus pentosaceus (strain ATCC 25745 / CCUG 21536 / LMG 10740 / 183-1w).